Reading from the N-terminus, the 30-residue chain is Putative UPF0377 protein YNR075C-A (30 aa).

This sequence belongs to the UPF0377 family.

The polypeptide is Putative UPF0377 protein YNR075C-A (Saccharomyces cerevisiae (strain ATCC 204508 / S288c) (Baker's yeast)).